We begin with the raw amino-acid sequence, 1659 residues long: eIF-2-alpha kinase GCN2 (1659 aa).

One can recognise an RWD domain in the interval Asn17–Phe128. Positions Lys149–Glu170 are disordered. 2 Protein kinase domains span residues Leu256–Leu527 and Phe599–Leu981. ATP-binding positions include Leu605–Val613 and Lys628. 2 disordered regions span residues Asn671–Glu691 and Phe727–Arg768. Ser761 is subject to Phosphoserine. Asp835 acts as the Proton acceptor in catalysis. Phosphothreonine; by autocatalysis occurs at positions 882 and 887. Residues Asn999–Ser1519 form a histidyl-tRNA synthetase-like region.

It belongs to the protein kinase superfamily. Ser/Thr protein kinase family. GCN2 subfamily. In terms of assembly, homodimer; homodimerization is important for kinase activation by uncharged tRNAs. Interacts (via N-terminal RWD domain) with GCN1 (via N- and C-terminus); this interaction stimulates GCN2 kinase activity in a GCN20-dependent manner in response to amino acid starvation. Interacts (via N-terminus) with the GCN1-GCN20 complex on translating ribosomes in amino acid-starved cells; GCN1 may bind near the ribosomal A-site and promotes the transfer of uncharged tRNAs from the A-site to the tRNA-binding domain in GCN2 for its subsequent kinase activation, and hence allowing GCN4 translational activation and derepression of amino acid biosynthetic genes. Interacts (via C-terminus) with TIF11; this interaction is direct, occurs in amino acid-repleted cells, may be stabilized in a ribosome-dependent manner, reduces GCN2-mediated eIF-2-alpha phosphorylation but not GCN2 autophosphorylation and is lost in amino acid-starved cells and by uncharged tRNAs. Associates (via C-terminus) with ribosomes. Mg(2+) serves as cofactor. In terms of processing, autophosphorylated, autophosphorylation on Thr-882 and Thr-887 increases kinase activity.

The protein resides in the cytoplasm. It carries out the reaction L-seryl-[protein] + ATP = O-phospho-L-seryl-[protein] + ADP + H(+). It catalyses the reaction L-threonyl-[protein] + ATP = O-phospho-L-threonyl-[protein] + ADP + H(+). With respect to regulation, the integrated stress response (ISR) is activated in response to conditions that promote ribosome collisions: GCN1, which acts as a ribosome collision sensor, activates GCN2. The RQC pathway and the integrated stress response (ISR) antagonize each other: HEL2 prevents the activation of GCN2, while GCN2 suppresses RQC activation. Ribosome stalling-induced integrated stress response prefers ribosomes with empty A sites. The kinase activity is stimulated upon binding to uncharged tRNAs. Its function is as follows. Metabolic-stress sensing protein kinase that phosphorylates the alpha subunit of eukaryotic translation initiation factor 2 (eIF-2-alpha/SUI2) on 'Ser-52' in response to low amino acid, carbon, or purine availability. Required for adapatation to nutrient starvation by acting as a key component of the integrated stress response (ISR), by which cells alter their translational and transcriptional output in response to starvation. Converts phosphorylated eIF-2-alpha/SUI2 either to a competitive inhibitor of translation initiation factor eIF-2B, leading to a global protein synthesis repression, and thus to a reduced overall utilization of amino acids, or to a translational initiation activation of specific mRNAs, such as the transcriptional activator GCN4, and hence allowing GCN4-mediated reprogramming of transcription to alleviate nutrient depletion. Binds uncharged tRNAs. Binds to aminoacylated tRNA(Phe) less tightly than to deacylated tRNA(Phe). Binds to double-stranded RNA. This is eIF-2-alpha kinase GCN2 from Saccharomyces cerevisiae (strain ATCC 204508 / S288c) (Baker's yeast).